The sequence spans 294 residues: 4-diphosphocytidyl-2-C-methyl-D-erythritol kinase (294 aa).

Lysine 19 is an active-site residue. Residue 106–116 participates in ATP binding; it reads PVASGIGGGSA. Aspartate 148 is an active-site residue.

It belongs to the GHMP kinase family. IspE subfamily.

It carries out the reaction 4-CDP-2-C-methyl-D-erythritol + ATP = 4-CDP-2-C-methyl-D-erythritol 2-phosphate + ADP + H(+). Its pathway is isoprenoid biosynthesis; isopentenyl diphosphate biosynthesis via DXP pathway; isopentenyl diphosphate from 1-deoxy-D-xylulose 5-phosphate: step 3/6. Catalyzes the phosphorylation of the position 2 hydroxy group of 4-diphosphocytidyl-2C-methyl-D-erythritol. The chain is 4-diphosphocytidyl-2-C-methyl-D-erythritol kinase from Rhizobium etli (strain ATCC 51251 / DSM 11541 / JCM 21823 / NBRC 15573 / CFN 42).